A 606-amino-acid chain; its full sequence is Aspartate--tRNA(Asp/Asn) ligase (606 aa).

L-aspartate is bound at residue Glu177. Residues 201-204 (QIFK) are aspartate. Arg223 contacts L-aspartate. ATP-binding positions include 223–225 (RDE) and Gln232. His461 contacts L-aspartate. Glu499 contributes to the ATP binding site. Arg506 contacts L-aspartate. An ATP-binding site is contributed by 551–554 (GLDR).

This sequence belongs to the class-II aminoacyl-tRNA synthetase family. Type 1 subfamily. As to quaternary structure, homodimer.

Its subcellular location is the cytoplasm. The enzyme catalyses tRNA(Asx) + L-aspartate + ATP = L-aspartyl-tRNA(Asx) + AMP + diphosphate. Aspartyl-tRNA synthetase with relaxed tRNA specificity since it is able to aspartylate not only its cognate tRNA(Asp) but also tRNA(Asn). Reaction proceeds in two steps: L-aspartate is first activated by ATP to form Asp-AMP and then transferred to the acceptor end of tRNA(Asp/Asn). The chain is Aspartate--tRNA(Asp/Asn) ligase from Prochlorococcus marinus (strain MIT 9211).